Consider the following 384-residue polypeptide: F-box A protein 224 (384 aa).

The region spanning 71 to 122 is the F-box domain; sequence PKSLSDFPIGVMYDVLGHVDPFERLVLRKVSRNLRDVVQKMRCELDALYVNK.

The protein belongs to the FTH family.

The protein is F-box A protein 224 (fbxa-224) of Caenorhabditis elegans.